Reading from the N-terminus, the 272-residue chain is Indole-3-glycerol phosphate synthase (272 aa).

Belongs to the TrpC family.

The catalysed reaction is 1-(2-carboxyphenylamino)-1-deoxy-D-ribulose 5-phosphate + H(+) = (1S,2R)-1-C-(indol-3-yl)glycerol 3-phosphate + CO2 + H2O. It participates in amino-acid biosynthesis; L-tryptophan biosynthesis; L-tryptophan from chorismate: step 4/5. This Mycobacterium ulcerans (strain Agy99) protein is Indole-3-glycerol phosphate synthase.